We begin with the raw amino-acid sequence, 61 residues long: 2S seed storage albumin protein (61 aa).

The protein belongs to the 2S seed storage albumins family. In terms of assembly, the mature protein consists of a small and a large chain linked by 2 disulfide bonds.

Functionally, this is a 2S seed storage protein. Inhibits cell-free protein synthesis. This Cucurbita moschata (Winter crookneck squash) protein is 2S seed storage albumin protein.